Reading from the N-terminus, the 154-residue chain is Aspartate carbamoyltransferase regulatory chain (154 aa).

Cys-109, Cys-114, Cys-138, and Cys-141 together coordinate Zn(2+).

Belongs to the PyrI family. In terms of assembly, contains catalytic and regulatory chains. Zn(2+) is required as a cofactor.

In terms of biological role, involved in allosteric regulation of aspartate carbamoyltransferase. The polypeptide is Aspartate carbamoyltransferase regulatory chain (Tolumonas auensis (strain DSM 9187 / NBRC 110442 / TA 4)).